Consider the following 157-residue polypeptide: uncharacterized protein (157 aa).

Positions 9-154 (LLINYKTLDE…ETNLNAVTNE (146 aa)) constitute an N-acetyltransferase domain.

This is an uncharacterized protein from Bacillus cereus (strain G9842).